We begin with the raw amino-acid sequence, 491 residues long: Glutamyl-tRNA(Gln) amidotransferase subunit A (491 aa).

Active-site charge relay system residues include K77 and S152. S176 functions as the Acyl-ester intermediate in the catalytic mechanism.

Belongs to the amidase family. GatA subfamily. As to quaternary structure, heterotrimer of A, B and C subunits.

The enzyme catalyses L-glutamyl-tRNA(Gln) + L-glutamine + ATP + H2O = L-glutaminyl-tRNA(Gln) + L-glutamate + ADP + phosphate + H(+). In terms of biological role, allows the formation of correctly charged Gln-tRNA(Gln) through the transamidation of misacylated Glu-tRNA(Gln) in organisms which lack glutaminyl-tRNA synthetase. The reaction takes place in the presence of glutamine and ATP through an activated gamma-phospho-Glu-tRNA(Gln). In Chlamydia felis (strain Fe/C-56) (Chlamydophila felis), this protein is Glutamyl-tRNA(Gln) amidotransferase subunit A.